The sequence spans 430 residues: Tyrosine--tRNA ligase (430 aa).

Position 32 (Y32) interacts with L-tyrosine. The short motif at 37 to 46 (PTADSLHIGH) is the 'HIGH' region element. L-tyrosine-binding residues include Y172 and Q176. Residues 232 to 236 (KFGKT) carry the 'KMSKS' region motif. K235 lines the ATP pocket. Positions 362-429 (VKAVDLFVDN…GKKNYFLLIA (68 aa)) constitute an S4 RNA-binding domain.

Belongs to the class-I aminoacyl-tRNA synthetase family. TyrS type 1 subfamily. Homodimer.

Its subcellular location is the cytoplasm. It catalyses the reaction tRNA(Tyr) + L-tyrosine + ATP = L-tyrosyl-tRNA(Tyr) + AMP + diphosphate + H(+). Its function is as follows. Catalyzes the attachment of tyrosine to tRNA(Tyr) in a two-step reaction: tyrosine is first activated by ATP to form Tyr-AMP and then transferred to the acceptor end of tRNA(Tyr). The protein is Tyrosine--tRNA ligase of Bacteroides thetaiotaomicron (strain ATCC 29148 / DSM 2079 / JCM 5827 / CCUG 10774 / NCTC 10582 / VPI-5482 / E50).